Here is a 186-residue protein sequence, read N- to C-terminus: Tail tubular protein A (186 aa).

It belongs to the tail tubular protein gp11 family.

It is found in the virion. The catalysed reaction is alpha,alpha-trehalose + H2O = alpha-D-glucose + beta-D-glucose. Its function is as follows. Structural component of the tail, which functions as a receptor binding protein (RBP) and mediates the attachment to the host capsular exopolysaccharides. Displays a depolymerase activity that specifically degrades the polysaccharides of Klebsiella pneumoniae capsule, which allows the phage to reach the host cell membrane and bind the entry receptor. Hydrolyzes trehalose. The polypeptide is Tail tubular protein A (Klebsiella phage KP34 (Bacteriophage KP34)).